The following is a 561-amino-acid chain: Eukaryotic translation initiation factor 3 subunit D-1 (561 aa).

A disordered region spans residues 98–164; the sequence is VQKPPHQRGR…RGPPPKMRES (67 aa). The segment covering 100–121 has biased composition (basic residues); sequence KPPHQRGRFRNMRNSRSGRGRN. At threonine 128 the chain carries Phosphothreonine. The interval 289 to 303 is RNA gate; that stretch reads EFDLLTVNETSVEPP.

It belongs to the eIF-3 subunit D family. As to quaternary structure, component of the eukaryotic translation initiation factor 3 (eIF-3) complex. The eIF-3 complex interacts with pix.

It is found in the cytoplasm. Functionally, mRNA cap-binding component of the eukaryotic translation initiation factor 3 (eIF-3) complex, which is involved in protein synthesis of a specialized repertoire of mRNAs and, together with other initiation factors, stimulates binding of mRNA and methionyl-tRNAi to the 40S ribosome. The eIF-3 complex specifically targets and initiates translation of a subset of mRNAs involved in cell proliferation. In the eIF-3 complex, eif3d specifically recognizes and binds the 7-methylguanosine cap of a subset of mRNAs. The polypeptide is Eukaryotic translation initiation factor 3 subunit D-1 (Drosophila ananassae (Fruit fly)).